Reading from the N-terminus, the 396-residue chain is 3-amino-4-hydroxybenzoic acid synthase (396 aa).

Positions 1-29 (MSSSPSPSPSSSSSSSASSSASSSPSSSS) are disordered.

The protein belongs to the archaeal-type DHQ synthase family. GriH subfamily. Monomer. Requires Mn(2+) as cofactor.

The catalysed reaction is 2-amino-4,5-dihydroxy-6-oxo-7-(phosphooxy)heptanoate = 3-amino-4-hydroxybenzoate + phosphate + 2 H2O + H(+). Functionally, catalyzes the cyclization of 2-amino-4,5-dihydroxy-6-one-heptanoic acid-7-phosphate to yield 3-amino-4-hydroxybenzoic acid (3,4-AHBA). This chain is 3-amino-4-hydroxybenzoic acid synthase (griH), found in Streptomyces griseus subsp. griseus (strain JCM 4626 / CBS 651.72 / NBRC 13350 / KCC S-0626 / ISP 5235).